A 918-amino-acid polypeptide reads, in one-letter code: von Willebrand factor A domain-containing protein DDB_G0292016 (918 aa).

The VIT domain maps to 44–172 (KRCGLYSLKN…NVKVRVVISS (129 aa)). The VWFA domain maps to 299 to 467 (EFIFLIDCSG…NMEKQVMKLL (169 aa)). A disordered region spans residues 625-814 (VDIMNQSPPI…PSAPSQQKSV (190 aa)). Over residues 650 to 690 (ASGALSSSILSRKRSSSPSTATKRSSSSSFSSSYLSLSSSS) the composition is skewed to low complexity. Residues 716–746 (YESDGGDQSSEQDEEEEDDCDDFHEDLDEDL) show a composition bias toward acidic residues. The span at 752 to 774 (DVDKKECEKECKKKDSSKVDLKV) shows a compositional bias: basic and acidic residues. Positions 777–814 (SKVPLPSRSPSVSKPTTTSLLSPSPKSAPSAPSQQKSV) are enriched in low complexity.

This is von Willebrand factor A domain-containing protein DDB_G0292016 from Dictyostelium discoideum (Social amoeba).